Reading from the N-terminus, the 273-residue chain is Undecaprenyl-diphosphatase (273 aa).

A run of 7 helical transmembrane segments spans residues 6–26 (SLLI…LPVS), 45–65 (AKTF…VMFW), 90–110 (LTLI…LLFH), 116–136 (LFNP…LIAA), 190–210 (YAAS…ATAL), 222–242 (GDIP…LIAI), and 252–272 (ISFI…YVVF).

The protein belongs to the UppP family.

It localises to the cell inner membrane. The catalysed reaction is di-trans,octa-cis-undecaprenyl diphosphate + H2O = di-trans,octa-cis-undecaprenyl phosphate + phosphate + H(+). Catalyzes the dephosphorylation of undecaprenyl diphosphate (UPP). Confers resistance to bacitracin. This is Undecaprenyl-diphosphatase from Escherichia coli O139:H28 (strain E24377A / ETEC).